Consider the following 279-residue polypeptide: Movement protein (279 aa).

Belongs to the cucumovirus movement protein family.

It localises to the host cell junction. The protein localises to the host plasmodesma. Its function is as follows. Transports viral genome to neighboring plant cells directly through plasmosdesmata, without any budding. The movement protein allows efficient cell to cell propagation, by bypassing the host cell wall barrier. Acts by forming a tubular structure at the host plasmodesmata, enlarging it enough to allow free passage of virion capsids. This chain is Movement protein, found in Cucumber mosaic virus (strain Kin) (CMV).